A 250-amino-acid polypeptide reads, in one-letter code: NAD(P)H-quinone oxidoreductase subunit K, chloroplastic (250 aa).

[4Fe-4S] cluster contacts are provided by Cys-61, Cys-62, Cys-126, and Cys-157.

Belongs to the complex I 20 kDa subunit family. NDH is composed of at least 16 different subunits, 5 of which are encoded in the nucleus. Requires [4Fe-4S] cluster as cofactor.

Its subcellular location is the plastid. It is found in the chloroplast thylakoid membrane. The enzyme catalyses a plastoquinone + NADH + (n+1) H(+)(in) = a plastoquinol + NAD(+) + n H(+)(out). It catalyses the reaction a plastoquinone + NADPH + (n+1) H(+)(in) = a plastoquinol + NADP(+) + n H(+)(out). Functionally, NDH shuttles electrons from NAD(P)H:plastoquinone, via FMN and iron-sulfur (Fe-S) centers, to quinones in the photosynthetic chain and possibly in a chloroplast respiratory chain. The immediate electron acceptor for the enzyme in this species is believed to be plastoquinone. Couples the redox reaction to proton translocation, and thus conserves the redox energy in a proton gradient. This Angiopteris evecta (Mule's foot fern) protein is NAD(P)H-quinone oxidoreductase subunit K, chloroplastic.